Consider the following 61-residue polypeptide: Small ribosomal subunit protein uS14 (61 aa).

Zn(2+) contacts are provided by C24, C27, C40, and C43.

The protein belongs to the universal ribosomal protein uS14 family. Zinc-binding uS14 subfamily. In terms of assembly, part of the 30S ribosomal subunit. Contacts proteins S3 and S10. It depends on Zn(2+) as a cofactor.

Functionally, binds 16S rRNA, required for the assembly of 30S particles and may also be responsible for determining the conformation of the 16S rRNA at the A site. The chain is Small ribosomal subunit protein uS14 from Staphylococcus carnosus (strain TM300).